A 384-amino-acid polypeptide reads, in one-letter code: Probable fructokinase-6, chloroplastic (384 aa).

The N-terminal 46 residues, 1-46 (MALQATTTTFCFSGPTFRSTPHSLTSKRPISIKATTSSPSRLSNSR), are a transit peptide targeting the chloroplast. The interval 34 to 61 (ATTSSPSRLSNSRSNLKGRALSSDGSTQ) is disordered. Residues 35–48 (TTSSPSRLSNSRSN) are compositionally biased toward low complexity.

The protein belongs to the carbohydrate kinase PfkB family.

It localises to the plastid. The protein resides in the chloroplast. It carries out the reaction D-fructose + ATP = D-fructose 6-phosphate + ADP + H(+). It participates in glycan biosynthesis; starch biosynthesis. In terms of biological role, may play an important role in maintaining the flux of carbon towards starch formation. The chain is Probable fructokinase-6, chloroplastic from Arabidopsis thaliana (Mouse-ear cress).